A 179-amino-acid polypeptide reads, in one-letter code: Large ribosomal subunit protein uL5 (179 aa).

This sequence belongs to the universal ribosomal protein uL5 family. Part of the 50S ribosomal subunit; part of the 5S rRNA/L5/L18/L25 subcomplex. Contacts the 5S rRNA and the P site tRNA. Forms a bridge to the 30S subunit in the 70S ribosome.

Its function is as follows. This is one of the proteins that bind and probably mediate the attachment of the 5S RNA into the large ribosomal subunit, where it forms part of the central protuberance. In the 70S ribosome it contacts protein S13 of the 30S subunit (bridge B1b), connecting the 2 subunits; this bridge is implicated in subunit movement. Contacts the P site tRNA; the 5S rRNA and some of its associated proteins might help stabilize positioning of ribosome-bound tRNAs. The protein is Large ribosomal subunit protein uL5 of Exiguobacterium sibiricum (strain DSM 17290 / CCUG 55495 / CIP 109462 / JCM 13490 / 255-15).